Consider the following 450-residue polypeptide: Probable ECA polymerase (450 aa).

The next 11 membrane-spanning stretches (helical) occupy residues F6 to F26, V37 to L57, V63 to A83, V118 to L138, G155 to L175, A181 to G201, I207 to W227, M228 to Y248, L341 to I361, Y378 to A398, and V410 to F430.

It belongs to the WzyE family. In terms of assembly, probably part of a complex composed of WzxE, WzyE and WzzE.

It localises to the cell inner membrane. The protein operates within bacterial outer membrane biogenesis; enterobacterial common antigen biosynthesis. In terms of biological role, probably involved in the polymerization of enterobacterial common antigen (ECA) trisaccharide repeat units. The protein is Probable ECA polymerase of Escherichia fergusonii (strain ATCC 35469 / DSM 13698 / CCUG 18766 / IAM 14443 / JCM 21226 / LMG 7866 / NBRC 102419 / NCTC 12128 / CDC 0568-73).